The primary structure comprises 198 residues: MSKEIYAIHPPWLRVTHWLYVVAVVILVMSGWRIYDASPFFPFFIPKEITLGGWLGGALQWHFAAMWLLAVNGLIYLFFNIFSGRLWHKFFPLSLRAIVADLLDALKGKLSHADLSHYNALQRAAYLFAIADIIVIVLSGLVLWKSVQFPILRELLGGYEAARRVHFIGMSALVAFVGVHVAMVALVPRTLIAMIRGH.

Transmembrane regions (helical) follow at residues 12 to 32 (WLRV…MSGW), 63 to 83 (FAAM…NIFS), 124 to 144 (AAYL…LVLW), and 167 to 187 (FIGM…VALV).

It belongs to the HupC/HyaC/HydC family.

The protein resides in the cell inner membrane. In terms of biological role, part of the YedY1-YedZ1 system that may repair oxidized proteins containing methionine sulfoxide residues (Met-O). This Azospira oryzae (strain ATCC BAA-33 / DSM 13638 / PS) (Dechlorosoma suillum) protein is Putative protein-methionine-sulfoxide reductase subunit YedZ1.